A 186-amino-acid chain; its full sequence is ATP synthase subunit delta (186 aa).

Belongs to the ATPase delta chain family. F-type ATPases have 2 components, F(1) - the catalytic core - and F(0) - the membrane proton channel. F(1) has five subunits: alpha(3), beta(3), gamma(1), delta(1), epsilon(1). CF(0) has four main subunits: a(1), b(1), b'(1) and c(10-14). The alpha and beta chains form an alternating ring which encloses part of the gamma chain. F(1) is attached to F(0) by a central stalk formed by the gamma and epsilon chains, while a peripheral stalk is formed by the delta, b and b' chains.

It localises to the cell inner membrane. Functionally, f(1)F(0) ATP synthase produces ATP from ADP in the presence of a proton or sodium gradient. F-type ATPases consist of two structural domains, F(1) containing the extramembraneous catalytic core and F(0) containing the membrane proton channel, linked together by a central stalk and a peripheral stalk. During catalysis, ATP synthesis in the catalytic domain of F(1) is coupled via a rotary mechanism of the central stalk subunits to proton translocation. Its function is as follows. This protein is part of the stalk that links CF(0) to CF(1). It either transmits conformational changes from CF(0) to CF(1) or is implicated in proton conduction. This chain is ATP synthase subunit delta, found in Rhodopseudomonas palustris (strain BisB5).